The chain runs to 151 residues: Large ribosomal subunit protein bL9 (151 aa).

The protein belongs to the bacterial ribosomal protein bL9 family.

Binds to the 23S rRNA. This is Large ribosomal subunit protein bL9 from Lacticaseibacillus casei (strain BL23) (Lactobacillus casei).